The following is a 242-amino-acid chain: Thaumatin-like protein 2 (242 aa).

The first 23 residues, 1 to 23 (MMKTLGAVLSLSLTLLSFGGAHA), serve as a signal peptide directing secretion. 8 cysteine pairs are disulfide-bonded: C32-C241, C77-C87, C92-C99, C147-C230, C152-C213, C160-C176, C180-C189, and C190-C200.

This sequence belongs to the thaumatin family. Preferentially expressed in the abscission zone of fruit. Also expressed in leaf abscission zone.

Its subcellular location is the secreted. Functionally, may be involved in protecting plant tissues from pathogen infection. This chain is Thaumatin-like protein 2, found in Prunus persica (Peach).